We begin with the raw amino-acid sequence, 299 residues long: Palmitoyltransferase ZDHHC3 (299 aa).

Residues 1-47 (MMLIPTHHFRDIERKPEYLQPEKCAPPPFPGPVGTMWFIRDGCGIAC) lie on the Cytoplasmic side of the membrane. Y18 carries the post-translational modification Phosphotyrosine. The chain crosses the membrane as a helical span at residues 48-68 (AIVTWFLVLYAEFVVLFVMLI). At 69–72 (PSRD) the chain is on the lumenal side. A helical transmembrane segment spans residues 73-93 (YAYSIINGIVFNLLAFLALAS). Topologically, residues 94–171 (HCRAMLTDPG…NCVGENNQKY (78 aa)) are cytoplasmic. The 127-residue stretch at 128–254 (KCPKCCSIKP…DETGIEQLKK (127 aa)) folds into the DHHC domain. C146 carries S-palmitoyl cysteine lipidation. The active-site S-palmitoyl cysteine intermediate is C157. The helical transmembrane segment at 172 to 192 (FVLFTMYIALISLHALIMVGF) threads the bilayer. Residues 193 to 214 (HFLHCFEEDWTKCSSFSPPTTV) lie on the Lumenal side of the membrane. The helical transmembrane segment at 215 to 235 (ILLILLCFEALLFLIFTSVMF) threads the bilayer. Residues 236–299 (GTQVHSICTD…GKADPYQYVV (64 aa)) are Cytoplasmic-facing.

The protein belongs to the DHHC palmitoyltransferase family. As to quaternary structure, monomer. Homooligomers. The monomeric form has a higher catalytic activity. Forms heterooligomers with ZDHHC7. Interacts with TNFRSF10A. Post-translationally, phosphorylation by FGFR1 and SRC probably regulates the palmitoyltransferase activity. In terms of processing, autopalmitoylated.

Its subcellular location is the golgi apparatus membrane. The catalysed reaction is L-cysteinyl-[protein] + hexadecanoyl-CoA = S-hexadecanoyl-L-cysteinyl-[protein] + CoA. It carries out the reaction L-cysteinyl-[protein] + tetradecanoyl-CoA = S-tetradecanoyl-L-cysteinyl-[protein] + CoA. The enzyme catalyses L-cysteinyl-[protein] + octadecanoyl-CoA = S-octadecanoyl-L-cysteinyl-[protein] + CoA. Golgi-localized palmitoyltransferase that catalyzes the addition of palmitate onto various protein substrates. Has no stringent fatty acid selectivity and in addition to palmitate can also transfer onto target proteins myristate from tetradecanoyl-CoA and stearate from octadecanoyl-CoA. Plays an important role in G protein-coupled receptor signaling pathways involving GNAQ and potentially other heterotrimeric G proteins by regulating their dynamic association with the plasma membrane. Palmitoylates ITGA6 and ITGB4, thereby regulating the alpha-6/beta-4 integrin localization, expression and function in cell adhesion to laminin. Plays a role in the TRAIL-activated apoptotic signaling pathway most probably through the palmitoylation and localization to the plasma membrane of TNFRSF10A. In the brain, by palmitoylating the gamma subunit GABRG2 of GABA(A) receptors and regulating their postsynaptic accumulation, plays a role in synaptic GABAergic inhibitory function and GABAergic innervation. Palmitoylates the neuronal protein GAP43 which is also involved in the formation of GABAergic synapses. Palmitoylates NCDN thereby regulating its association with endosome membranes. Probably palmitoylates PRCD and is involved in its proper localization within the photoreceptor. Could mediate the palmitoylation of NCAM1 and regulate neurite outgrowth. Could palmitoylate DNAJC5 and regulate its localization to Golgi membranes. Also constitutively palmitoylates DLG4. May also palmitoylate SNAP25. Could palmitoylate the glutamate receptors GRIA1 and GRIA2 but this has not been confirmed in vivo. Could also palmitoylate the D(2) dopamine receptor DRD2. May also palmitoylate LAMTOR1, promoting its localization to lysosomal membranes. Palmitoylates the Toll-like receptor 9/TLR9 in the Golgi and thereby regulates TLR9 trafficking to endosomes. May palmitoylate CALHM1 and CALHM3 subunits of gustatory voltage-gated ion channels and modulate channel gating and kinetics. This chain is Palmitoyltransferase ZDHHC3, found in Rattus norvegicus (Rat).